The primary structure comprises 195 residues: Ras-related protein Rab-31 (195 aa).

Residues G16, G18, K19, S20, S21, D32, and H33 each coordinate GTP. S20 lines the Mg(2+) pocket. Short sequence motifs (switch) lie at residues 30-42 and 63-79; these read HFDH…IGAS and AGQE…YRGS. S36 carries the phosphoserine modification. GTP-binding residues include T38, G64, N119, D122, A150, and K151. T38 provides a ligand contact to Mg(2+). Positions 168–195 are disordered; the sequence is PPLGPQENGNSGGIKLGNQSLQASRRCC. The segment covering 184–195 has biased composition (polar residues); sequence GNQSLQASRRCC. S-geranylgeranyl cysteine attachment occurs at residues C194 and C195.

This sequence belongs to the small GTPase superfamily. Rab family. In terms of assembly, interacts with OCRL. Interacts (in GDP-bound form) with RIN3 and GAPVD1, which function as guanine exchange factors (GEF). Interacts with EGFR. Interacts with NGFR. Interacts (in GTP-bound form) with EEA1. Interacts (in GTP-bound form) with APPL2; interaction contributes to or enhances recruitment of APPL2 to the phagosomes; interaction enhances Fc-gamma receptor-mediated phagocytosis through PI3K/Akt signaling in macrophages. Mg(2+) serves as cofactor. In terms of tissue distribution, detected in brain astrocytes (at protein level).

The protein resides in the early endosome. It is found in the golgi apparatus. It localises to the trans-Golgi network. Its subcellular location is the trans-Golgi network membrane. The protein localises to the cytoplasmic vesicle. The protein resides in the phagosome. It is found in the phagosome membrane. The enzyme catalyses GTP + H2O = GDP + phosphate + H(+). Regulated by guanine nucleotide exchange factors (GEFs) including RIN3 and GAPVD1 which promote the exchange of bound GDP for free GTP. Regulated by GTPase activating proteins (GAPs) which increase the GTP hydrolysis activity. Inhibited by GDP dissociation inhibitors (GDIs) which prevent Rab-GDP dissociation. In terms of biological role, the small GTPases Rab are key regulators of intracellular membrane trafficking, from the formation of transport vesicles to their fusion with membranes. Rabs cycle between an inactive GDP-bound form and an active GTP-bound form that is able to recruit to membranes different set of downstream effectors directly responsible for vesicle formation, movement, tethering and fusion. Required for the integrity and for normal function of the Golgi apparatus and the trans-Golgi network. Plays a role in insulin-stimulated translocation of GLUT4 to the cell membrane. Plays a role in the maturation of phagosomes that engulf pathogens, such as S.aureus and Mycobacterium. Plays a role in M6PR transport from the trans-Golgi network to endosomes. Plays a role in the internalization of EGFR from the cell membrane into endosomes. This is Ras-related protein Rab-31 from Mus musculus (Mouse).